Reading from the N-terminus, the 165-residue chain is Protein SprT (165 aa).

The SprT-like domain occupies 22–163; it reads LAQANLKLGC…RCVHCGEQLV (142 aa). Residue His78 coordinates Zn(2+). The active site involves Glu79. Residue His82 coordinates Zn(2+).

The protein belongs to the SprT family. Requires Zn(2+) as cofactor.

Its subcellular location is the cytoplasm. The chain is Protein SprT from Shigella dysenteriae serotype 1 (strain Sd197).